The chain runs to 64 residues: MSYKCQLCGKGSVTGGSYSHSHRNTKRTFRPNLQKQKVVLEGKTQTAYVCTKCIKSGFTTKPVK.

This sequence belongs to the bacterial ribosomal protein bL28 family.

The chain is Large ribosomal subunit protein bL28 from Elusimicrobium minutum (strain Pei191).